Reading from the N-terminus, the 155-residue chain is Small ribosomal subunit protein uS7c (155 aa).

The protein belongs to the universal ribosomal protein uS7 family. Part of the 30S ribosomal subunit.

The protein resides in the plastid. It is found in the chloroplast. Its function is as follows. One of the primary rRNA binding proteins, it binds directly to 16S rRNA where it nucleates assembly of the head domain of the 30S subunit. This Metasequoia glyptostroboides (Dawn redwood) protein is Small ribosomal subunit protein uS7c (rps7).